Reading from the N-terminus, the 90-residue chain is Putative large ribosomal subunit protein uL23c (90 aa).

The interval 1-46 (MDGIKYAVFTDKSIQLLGKKQYTSNVESRSTRTEIKHWVELWNSYE) is coded by first part of gene. Residues 47-90 (MNSHRLPGKGRRMGPIMGHTMHYRRMIITLQSSYSIPPLRKKRT) form a coded by second part of gene region.

Belongs to the universal ribosomal protein uL23 family. In terms of assembly, part of the 50S ribosomal subunit.

It is found in the plastid. It localises to the chloroplast. Its function is as follows. Binds to 23S rRNA. The protein is Putative large ribosomal subunit protein uL23c (rpl23) of Spinacia oleracea (Spinach).